Consider the following 483-residue polypeptide: Protein nucleotidyltransferase YdiU (483 aa).

ATP-binding residues include Gly-81, Gly-83, Arg-84, Lys-103, Asp-115, Gly-116, Arg-166, and Arg-173. Asp-244 functions as the Proton acceptor in the catalytic mechanism. Mg(2+) contacts are provided by Asn-245 and Asp-254. Residue Asp-254 participates in ATP binding.

This sequence belongs to the SELO family. The cofactor is Mg(2+). Mn(2+) serves as cofactor.

It carries out the reaction L-seryl-[protein] + ATP = 3-O-(5'-adenylyl)-L-seryl-[protein] + diphosphate. It catalyses the reaction L-threonyl-[protein] + ATP = 3-O-(5'-adenylyl)-L-threonyl-[protein] + diphosphate. The catalysed reaction is L-tyrosyl-[protein] + ATP = O-(5'-adenylyl)-L-tyrosyl-[protein] + diphosphate. The enzyme catalyses L-histidyl-[protein] + UTP = N(tele)-(5'-uridylyl)-L-histidyl-[protein] + diphosphate. It carries out the reaction L-seryl-[protein] + UTP = O-(5'-uridylyl)-L-seryl-[protein] + diphosphate. It catalyses the reaction L-tyrosyl-[protein] + UTP = O-(5'-uridylyl)-L-tyrosyl-[protein] + diphosphate. Functionally, nucleotidyltransferase involved in the post-translational modification of proteins. It can catalyze the addition of adenosine monophosphate (AMP) or uridine monophosphate (UMP) to a protein, resulting in modifications known as AMPylation and UMPylation. In Shewanella pealeana (strain ATCC 700345 / ANG-SQ1), this protein is Protein nucleotidyltransferase YdiU.